The sequence spans 230 residues: MSIIEMRDVVKKYDNGTTALRGVSVSVQPGEFAYIVGPSGAGKSTFIRSLYREVKIDKGSLSVAGFNLVKIKKKDVPLLRRSVGVVFQDYKLLPKKTVYENIAYAMEVIGENRRNIKRRVMEVLDLVGLKHKVRSFPNELSGGEQQRIAIARAIVNNPKVLIADEPTGNLDPDNSWEIMNLLERINLQGTTILMATHNSQIVNTLRHRVIAIENGRVVRDESKGEYGYDD.

The region spanning 4–229 (IEMRDVVKKY…DESKGEYGYD (226 aa)) is the ABC transporter domain. Residue 37-44 (GPSGAGKS) coordinates ATP.

This sequence belongs to the ABC transporter superfamily. As to quaternary structure, homodimer. Interacts with FtsX; forms a membrane-associated complex. Interacts with pcsB.

It localises to the cell membrane. It carries out the reaction ATP + H2O = ADP + phosphate + H(+). In terms of biological role, part of the ABC transporter FtsEX involved in cellular division. Has ATPase activity. Essential for cell division and viability. The chain is Cell division ATP-binding protein FtsE from Streptococcus pneumoniae serotype 2 (strain D39 / NCTC 7466).